A 147-amino-acid chain; its full sequence is uncharacterized protein (147 aa).

In terms of domain architecture, CMP/dCMP-type deaminase spans 4 to 120 (KWAKRFFQMA…EQTEDFLSRW (117 aa)). Zn(2+) is bound at residue His-67. Glu-69 (proton donor) is an active-site residue. Positions 92 and 95 each coordinate Zn(2+).

It belongs to the cytidine and deoxycytidylate deaminase family. The cofactor is Zn(2+).

This is an uncharacterized protein from Aliivibrio fischeri (Vibrio fischeri).